Here is a 109-residue protein sequence, read N- to C-terminus: Flagellar hook-basal body complex protein FliE (109 aa).

The protein belongs to the FliE family.

Its subcellular location is the bacterial flagellum basal body. This is Flagellar hook-basal body complex protein FliE from Stutzerimonas stutzeri (strain A1501) (Pseudomonas stutzeri).